The following is a 527-amino-acid chain: Bifunctional purine biosynthesis protein PurH (527 aa).

The MGS-like domain occupies 1-149 (MASDFLPVRR…KNFARVAVAT (149 aa)).

This sequence belongs to the PurH family.

The catalysed reaction is (6R)-10-formyltetrahydrofolate + 5-amino-1-(5-phospho-beta-D-ribosyl)imidazole-4-carboxamide = 5-formamido-1-(5-phospho-D-ribosyl)imidazole-4-carboxamide + (6S)-5,6,7,8-tetrahydrofolate. The enzyme catalyses IMP + H2O = 5-formamido-1-(5-phospho-D-ribosyl)imidazole-4-carboxamide. It participates in purine metabolism; IMP biosynthesis via de novo pathway; 5-formamido-1-(5-phospho-D-ribosyl)imidazole-4-carboxamide from 5-amino-1-(5-phospho-D-ribosyl)imidazole-4-carboxamide (10-formyl THF route): step 1/1. Its pathway is purine metabolism; IMP biosynthesis via de novo pathway; IMP from 5-formamido-1-(5-phospho-D-ribosyl)imidazole-4-carboxamide: step 1/1. The polypeptide is Bifunctional purine biosynthesis protein PurH (Xanthomonas oryzae pv. oryzae (strain KACC10331 / KXO85)).